The sequence spans 276 residues: Diaminopimelate epimerase (276 aa).

The substrate site is built by Asn-13, Gln-46, and Asn-66. Cys-75 (proton donor) is an active-site residue. Substrate-binding positions include 76–77 (GN), Asn-159, Asn-192, and 210–211 (ER). Residue Cys-219 is the Proton acceptor of the active site. 220 to 221 (GS) provides a ligand contact to substrate.

Belongs to the diaminopimelate epimerase family. Homodimer.

It is found in the cytoplasm. It catalyses the reaction (2S,6S)-2,6-diaminopimelate = meso-2,6-diaminopimelate. It participates in amino-acid biosynthesis; L-lysine biosynthesis via DAP pathway; DL-2,6-diaminopimelate from LL-2,6-diaminopimelate: step 1/1. Catalyzes the stereoinversion of LL-2,6-diaminopimelate (L,L-DAP) to meso-diaminopimelate (meso-DAP), a precursor of L-lysine and an essential component of the bacterial peptidoglycan. The polypeptide is Diaminopimelate epimerase (Vibrio campbellii (strain ATCC BAA-1116)).